The primary structure comprises 327 residues: Glycerol-3-phosphate dehydrogenase [NAD(P)+] (327 aa).

Positions 10, 11, 31, and 108 each coordinate NADPH. Positions 108, 136, and 138 each coordinate sn-glycerol 3-phosphate. An NADPH-binding site is contributed by Ala140. Sn-glycerol 3-phosphate is bound by residues Lys191, Asp246, Ser256, Arg257, and Asn258. The active-site Proton acceptor is the Lys191. Arg257 serves as a coordination point for NADPH. The NADPH site is built by Leu281 and Glu283.

It belongs to the NAD-dependent glycerol-3-phosphate dehydrogenase family.

The protein resides in the cytoplasm. It carries out the reaction sn-glycerol 3-phosphate + NAD(+) = dihydroxyacetone phosphate + NADH + H(+). It catalyses the reaction sn-glycerol 3-phosphate + NADP(+) = dihydroxyacetone phosphate + NADPH + H(+). Its pathway is membrane lipid metabolism; glycerophospholipid metabolism. In terms of biological role, catalyzes the reduction of the glycolytic intermediate dihydroxyacetone phosphate (DHAP) to sn-glycerol 3-phosphate (G3P), the key precursor for phospholipid synthesis. The polypeptide is Glycerol-3-phosphate dehydrogenase [NAD(P)+] (Ehrlichia ruminantium (strain Gardel)).